The chain runs to 420 residues: Serine hydroxymethyltransferase (420 aa).

Residues leucine 121 and 125–127 each bind (6S)-5,6,7,8-tetrahydrofolate; that span reads GHL. Lysine 230 is modified (N6-(pyridoxal phosphate)lysine). A (6S)-5,6,7,8-tetrahydrofolate-binding site is contributed by 354 to 356; the sequence is SPF.

This sequence belongs to the SHMT family. Homodimer. The cofactor is pyridoxal 5'-phosphate.

The protein localises to the cytoplasm. The enzyme catalyses (6R)-5,10-methylene-5,6,7,8-tetrahydrofolate + glycine + H2O = (6S)-5,6,7,8-tetrahydrofolate + L-serine. It participates in one-carbon metabolism; tetrahydrofolate interconversion. It functions in the pathway amino-acid biosynthesis; glycine biosynthesis; glycine from L-serine: step 1/1. Functionally, catalyzes the reversible interconversion of serine and glycine with tetrahydrofolate (THF) serving as the one-carbon carrier. This reaction serves as the major source of one-carbon groups required for the biosynthesis of purines, thymidylate, methionine, and other important biomolecules. Also exhibits THF-independent aldolase activity toward beta-hydroxyamino acids, producing glycine and aldehydes, via a retro-aldol mechanism. In Rickettsia africae (strain ESF-5), this protein is Serine hydroxymethyltransferase.